A 170-amino-acid polypeptide reads, in one-letter code: Vimentin A1 (170 aa).

Polar residues predominate over residues 1 to 10 (DLTEAANKSN). The disordered stretch occupies residues 1–20 (DLTEAANKSNEALRLAKQES). Residues 1–111 (DLTEAANKSN…ATYRKLLEGE (111 aa)) are coil 2. Residues 1-115 (DLTEAANKSN…KLLEGEESRI (115 aa)) form the IF rod domain. Residues 112-170 (ESRISTPLPNFSSFNLRETMLELKPNIESTFTKKVLIKTIETRDGQVLNESTQNHDDLE) are tail.

The protein belongs to the intermediate filament family. As to quaternary structure, homomer. One of the most prominent phosphoproteins in various cells of mesenchymal origin. Phosphorylation is enhanced during cell division, at which time vimentin filaments are significantly reorganized. In terms of tissue distribution, expressed in low amounts in retina, optic nerve, and brain and in higher amounts in spinal cord.

Its function is as follows. Vimentins are class-III intermediate filaments found in various non-epithelial cells, especially mesenchymal cells. Vimentin is attached to the nucleus, endoplasmic reticulum, and mitochondria, either laterally or terminally. The protein is Vimentin A1 of Carassius auratus (Goldfish).